Here is a 210-residue protein sequence, read N- to C-terminus: Probable septum site-determining protein MinC (210 aa).

Belongs to the MinC family. In terms of assembly, interacts with MinD and FtsZ.

Its function is as follows. Cell division inhibitor that blocks the formation of polar Z ring septums. Rapidly oscillates between the poles of the cell to destabilize FtsZ filaments that have formed before they mature into polar Z rings. Prevents FtsZ polymerization. This is Probable septum site-determining protein MinC from Thermotoga petrophila (strain ATCC BAA-488 / DSM 13995 / JCM 10881 / RKU-1).